The sequence spans 534 residues: SWI/SNF complex component SNF12 homolog (534 aa).

The span at Met-1–Gln-12 shows a compositional bias: polar residues. Disordered regions lie at residues Met-1–Gln-33 and Met-78–Arg-132. The segment covering Pro-94–Leu-105 has biased composition (low complexity). The SWIB/MDM2 domain maps to Tyr-314–Pro-391.

Belongs to the SMARCD family. Part of a SWI-SNF complex.

The protein localises to the nucleus. Involved in transcriptional activation and repression of select genes by chromatin remodeling (alteration of DNA-nucleosome topology). This chain is SWI/SNF complex component SNF12 homolog, found in Arabidopsis thaliana (Mouse-ear cress).